Reading from the N-terminus, the 73-residue chain is Large ribosomal subunit protein uL29 (73 aa).

This sequence belongs to the universal ribosomal protein uL29 family.

The sequence is that of Large ribosomal subunit protein uL29 (rpmC) from Aquifex aeolicus (strain VF5).